A 366-amino-acid chain; its full sequence is Chorismate synthase (366 aa).

Arg-48 provides a ligand contact to NADP(+). FMN is bound by residues 125 to 127, Gly-285, 300 to 304, and Arg-327; these read RSS and KPTPS.

This sequence belongs to the chorismate synthase family. The cofactor is FMNH2.

It catalyses the reaction 5-O-(1-carboxyvinyl)-3-phosphoshikimate = chorismate + phosphate. It functions in the pathway metabolic intermediate biosynthesis; chorismate biosynthesis; chorismate from D-erythrose 4-phosphate and phosphoenolpyruvate: step 7/7. Its function is as follows. Catalyzes the anti-1,4-elimination of the C-3 phosphate and the C-6 proR hydrogen from 5-enolpyruvylshikimate-3-phosphate (EPSP) to yield chorismate, which is the branch point compound that serves as the starting substrate for the three terminal pathways of aromatic amino acid biosynthesis. This reaction introduces a second double bond into the aromatic ring system. The protein is Chorismate synthase of Methanococcoides burtonii (strain DSM 6242 / NBRC 107633 / OCM 468 / ACE-M).